The following is a 202-amino-acid chain: NADH-quinone oxidoreductase subunit B (202 aa).

[4Fe-4S] cluster contacts are provided by Cys-81, Cys-82, Cys-146, and Cys-176.

This sequence belongs to the complex I 20 kDa subunit family. As to quaternary structure, NDH-1 is composed of 14 different subunits. Subunits NuoB, C, D, E, F, and G constitute the peripheral sector of the complex. The cofactor is [4Fe-4S] cluster.

It localises to the cell inner membrane. It catalyses the reaction a quinone + NADH + 5 H(+)(in) = a quinol + NAD(+) + 4 H(+)(out). In terms of biological role, NDH-1 shuttles electrons from NADH, via FMN and iron-sulfur (Fe-S) centers, to quinones in the respiratory chain. The immediate electron acceptor for the enzyme in this species is believed to be ubiquinone. Couples the redox reaction to proton translocation (for every two electrons transferred, four hydrogen ions are translocated across the cytoplasmic membrane), and thus conserves the redox energy in a proton gradient. This Bradyrhizobium diazoefficiens (strain JCM 10833 / BCRC 13528 / IAM 13628 / NBRC 14792 / USDA 110) protein is NADH-quinone oxidoreductase subunit B.